A 508-amino-acid chain; its full sequence is MIAVLFSFVIAGCIYYIVSRRVRRSRLPPGPPGIPIPFIGNMFDMPEESPWLTFLQWGRDYNTDILYVDAGGTEMVILNTLETITDLLEKRGSIYSGRLESTMVNELMGWEFDLGFITYGDRWREERRMFAKEFSEKGIKQFRHAQVKAAHQLVQQLTKTPDRWAQHIRHQIAAMSLDIGYGIDLAEDDPWLEATHLANEGLAIASVPGKFWVDSFPSLKYLPAWFPGAVFKRKAKVWREAADHMVDMPYETMRKLAPQGLTRPSYASARLQAMDLNGDLEHQEHVIKNTAAEVNVGGGDTTVSAMSAFILAMVKYPEVQRKVQAELDALTNNGQIPDYDEEDDSLPYLTACIKELFRWNQIAPLAIPHKLMKDDVYRGYLIPKNTLVFANTWAVLNDPEVYPDPSVFRPERYLGPDGKPDNTVRDPRKAAFGYGRRNCPGIHLAQSTVWIAGATLLSAFNIERPVDQNGKPIDIPADFTTGFFRHPVPFQCRFVPRTEQVSQSVSGP.

The first 19 residues, 1-19, serve as a signal peptide directing secretion; that stretch reads MIAVLFSFVIAGCIYYIVS. Cys-439 serves as a coordination point for heme.

It belongs to the cytochrome P450 family. The cofactor is heme.

It carries out the reaction tryptamine + AH2 + O2 = 4-hydroxytryptamine + A + H2O. It functions in the pathway secondary metabolite biosynthesis. Its function is as follows. Cytochrome P450 monooxygenase; part of the gene cluster that mediates the biosynthesis of psilocybin, a psychotropic tryptamine-derived natural product. The first step in the pathway is the decarboxylation of L-tryptophan to tryptamine by the decarboxylase psiD. 4-hydroxy-L-tryptophan is accepted as substrate by psiD as well. The cytochrome P450 monooxygenase psiH then converts tryptamine to 4-hydroxytryptamine. The kinase psiK catalyzes the 4-O-phosphorylation step by converting 4-hydroxytryptamine into norbaeocystin. The methyltransferase psiM then catalyzes iterative methyl transfer to the amino group of norbaeocystin to yield psilocybin via a monomethylated intermediate, baeocystin. In Psilocybe cubensis (Psychedelic mushroom), this protein is Tryptamine 4-monooxygenase.